We begin with the raw amino-acid sequence, 105 residues long: Large ribosomal subunit protein P2 (105 aa).

Belongs to the eukaryotic ribosomal protein P1/P2 family. In terms of assembly, P1 and P2 exist as dimers at the large ribosomal subunit. In terms of processing, phosphorylated.

Plays an important role in the elongation step of protein synthesis. The polypeptide is Large ribosomal subunit protein P2 (LIP2) (Leishmania braziliensis).